Here is a 376-residue protein sequence, read N- to C-terminus: UDP-N-acetylglucosamine--N-acetylmuramyl-(pentapeptide) pyrophosphoryl-undecaprenol N-acetylglucosamine transferase (376 aa).

UDP-N-acetyl-alpha-D-glucosamine-binding positions include 11 to 13 (TGG), N117, R160, S208, and Q310.

This sequence belongs to the glycosyltransferase 28 family. MurG subfamily.

The protein localises to the cell inner membrane. The enzyme catalyses di-trans,octa-cis-undecaprenyl diphospho-N-acetyl-alpha-D-muramoyl-L-alanyl-D-glutamyl-meso-2,6-diaminopimeloyl-D-alanyl-D-alanine + UDP-N-acetyl-alpha-D-glucosamine = di-trans,octa-cis-undecaprenyl diphospho-[N-acetyl-alpha-D-glucosaminyl-(1-&gt;4)]-N-acetyl-alpha-D-muramoyl-L-alanyl-D-glutamyl-meso-2,6-diaminopimeloyl-D-alanyl-D-alanine + UDP + H(+). It participates in cell wall biogenesis; peptidoglycan biosynthesis. Functionally, cell wall formation. Catalyzes the transfer of a GlcNAc subunit on undecaprenyl-pyrophosphoryl-MurNAc-pentapeptide (lipid intermediate I) to form undecaprenyl-pyrophosphoryl-MurNAc-(pentapeptide)GlcNAc (lipid intermediate II). This chain is UDP-N-acetylglucosamine--N-acetylmuramyl-(pentapeptide) pyrophosphoryl-undecaprenol N-acetylglucosamine transferase, found in Rickettsia rickettsii (strain Iowa).